A 283-amino-acid chain; its full sequence is MAGAVSLLGVVGLLLVSALSGVLGDRANPDLRAHPGNAAHPGSGATEPRRRPPLKDQRERTRAGSLPLGALYTAAVAAFVLYKCLQGKDETAVLHEEASKQQPLQSEQQLAQLTQQLAQTEQHLNNLMAQLDPLFERVTTLAGAQQELLNMKLWTIHELLQDSKPDKDMEASEPGEGSGGESAGGGDKVSETGTFLISPHTEASRPLPEDFCLKEDEEEIGDSQAWEEPTNWSTETWNLATSWEVGRGLRRRCSQAVAKGPSHSLGWEGGTTAEGRLKQSLFS.

A signal peptide spans 1-24 (MAGAVSLLGVVGLLLVSALSGVLG). Positions 30-62 (DLRAHPGNAAHPGSGATEPRRRPPLKDQRERTR) are disordered. A compositionally biased stretch (basic and acidic residues) spans 47 to 62 (EPRRRPPLKDQRERTR). The helical transmembrane segment at 65-85 (SLPLGALYTAAVAAFVLYKCL) threads the bilayer. The stretch at 104–134 (LQSEQQLAQLTQQLAQTEQHLNNLMAQLDPL) forms a coiled coil. 2 disordered regions span residues 164 to 207 (KPDK…SRPL) and 258 to 283 (AKGP…SLFS). A compositionally biased stretch (gly residues) spans 176-187 (EGSGGESAGGGD).

The protein resides in the membrane. In Homo sapiens (Human), this protein is Coiled-coil domain-containing protein 107 (CCDC107).